The sequence spans 57 residues: High-potential iron-sulfur protein (57 aa).

[4Fe-4S] cluster-binding residues include Cys21, Cys24, Cys33, and Cys46.

The protein belongs to the high-potential iron-sulfur protein (HiPIP) family. As to quaternary structure, homodimer.

In terms of biological role, specific class of high-redox-potential 4Fe-4S ferredoxins. Functions in anaerobic electron transport in most purple and in some other photosynthetic bacteria and in at least one genus (Paracoccus) of halophilic, denitrifying bacteria. The protein is High-potential iron-sulfur protein (hip) of Rhodopila globiformis (Rhodopseudomonas globiformis).